Consider the following 99-residue polypeptide: C-C motif chemokine 17 (99 aa).

An N-terminal signal peptide occupies residues 1-23 (MIPLKMLLLVTLLLGASLQVTHA). 2 disulfides stabilise this stretch: C33–C57 and C34–C73.

This sequence belongs to the intercrine beta (chemokine CC) family. In terms of tissue distribution, expressed in thymus, spleen, lymph node, lung and heart.

The protein resides in the secreted. Functionally, chemokine, which displays chemotactic activity for T lymphocytes, preferentially Th2 cells, but not monocytes or granulocytes. Therefore plays an important role in a wide range of inflammatory and immunological processes. Acts by binding to CCR4 at T-cell surface. Mediates GM-CSF/CSF2-driven pain and inflammation. In the brain, required to maintain the typical, highly branched morphology of hippocampal microglia under homeostatic conditions. May be important for the appropriate adaptation of microglial morphology and synaptic plasticity to acute lipopolysaccharide (LPS)-induced neuroinflammation. Plays a role in wound healing, mainly by inducing fibroblast migration into the wound. The polypeptide is C-C motif chemokine 17 (CCL17) (Canis lupus familiaris (Dog)).